The primary structure comprises 360 residues: DNA replication and repair protein RecF (360 aa).

30 to 37 (GQNGSGKT) contributes to the ATP binding site.

Belongs to the RecF family.

It localises to the cytoplasm. Functionally, the RecF protein is involved in DNA metabolism; it is required for DNA replication and normal SOS inducibility. RecF binds preferentially to single-stranded, linear DNA. It also seems to bind ATP. This is DNA replication and repair protein RecF from Shewanella baltica (strain OS223).